The chain runs to 309 residues: Intron-encoded DNA endonuclease ai2a (309 aa).

Belongs to the LAGLIDADG endonuclease family.

It is found in the mitochondrion. Its function is as follows. Mitochondrial DNA endonuclease involved in intron homing. Cleaves only one strand of intronless DNA sequence at the site which coincides with the I-SceII cleavage recognition site. The polypeptide is Intron-encoded DNA endonuclease ai2a (ai2a) (Dictyostelium discoideum (Social amoeba)).